An 868-amino-acid polypeptide reads, in one-letter code: E3 ubiquitin-protein ligase TRIM71 (868 aa).

Residue Ala-2 is modified to N-acetylalanine. An RING-type zinc finger spans residues 12-89; the sequence is CLLCKEMCGS…PLKLRCPVCD (78 aa). Positions 26–41 are enriched in low complexity; it reads SSNSSASSSSSQTSTS. Disordered stretches follow at residues 26 to 50 and 121 to 186; these read SSNS…GGPG and ADEP…GSPS. Residues 142–153 are compositionally biased toward basic residues; that stretch reads SNHRHHAHHAHP. Residues 159–176 are compositionally biased toward pro residues; the sequence is APPPPLPPAPPPPAPPRS. Residues 177-186 show a composition bias toward low complexity; that stretch reads APGGPAGSPS. The B box-type 1; atypical zinc-finger motif lies at 191-238; that stretch reads RRPHGCSSCDEGNAASSRCLDCQEHLCDNCVRAHQRVRLTKDHYIERG. The B box-type 2 zinc finger occupies 273 to 314; that stretch reads ERLGFCQHHDDEVLHLYCDTCSVPICRECTVGRHGGHSFVYL. Zn(2+) is bound by residues Cys-278, His-281, Cys-301, and His-306. Positions 391–427 form a coiled coil; that stretch reads QVKAKSLYLQVEKLRQNLNKLESTISAVQQVLEEGRA. The stretch at 479–580 is one Filamin repeat; the sequence is SSGAFAPLTK…IENSPFKVVV (102 aa). NHL repeat units follow at residues 593–636, 640–683, 687–730, 734–777, 781–824, and 828–868; these read GLSF…FKPC, HHKF…FTFE, LLKF…FGPD, LNKY…IHPD, ARFL…FESN, and LCKF…ILIF.

Belongs to the TRIM/RBCC family. In terms of assembly, interacts (via NHL repeats) with AGO2; the interaction increases in presence of RNA. Interacts with HSP90AA1. Interacts (via NHL repeats) with MOV10, PABPC1, PUM1, PUM2, STAU2, XRN1 and XRN2 in an RNA-dependent manner. Interacts with SHCBP1; leading to enhance its stability. Autoubiquitinated.

The protein resides in the cytoplasm. It is found in the P-body. The enzyme catalyses S-ubiquitinyl-[E2 ubiquitin-conjugating enzyme]-L-cysteine + [acceptor protein]-L-lysine = [E2 ubiquitin-conjugating enzyme]-L-cysteine + N(6)-ubiquitinyl-[acceptor protein]-L-lysine.. It participates in protein modification; protein ubiquitination. E3 ubiquitin-protein ligase that cooperates with the microRNAs (miRNAs) machinery and promotes embryonic stem cells proliferation and maintenance. Binds to miRNAs and associates with AGO2, participating in post-transcriptional repression of transcripts such as CDKN1A. In addition, participates in post-transcriptional mRNA repression in a miRNA independent mechanism. Facilitates the G1-S transition to promote rapid embryonic stem cell self-renewal by repressing CDKN1A expression. Required to maintain proliferation and prevent premature differentiation of neural progenitor cells during early neural development: positively regulates FGF signaling by controlling the stability of SHCBP1. Specific regulator of miRNA biogenesis. Binds to miRNA MIR29A hairpin and postranscriptionally modulates MIR29A levels, which indirectly regulates TET proteins expression. This chain is E3 ubiquitin-protein ligase TRIM71 (TRIM71), found in Bos taurus (Bovine).